The primary structure comprises 133 residues: uncharacterized protein (133 aa).

The protein belongs to the ycf68 family.

Its subcellular location is the plastid. The protein resides in the chloroplast. This is an uncharacterized protein from Oryza sativa subsp. japonica (Rice).